The primary structure comprises 1262 residues: Histone-lysine N-methyltransferase eggless (1262 aa).

Residues 1–194 form a disordered region; that stretch reads MSGQPTAVDC…MEVDQDVEES (194 aa). Composition is skewed to basic and acidic residues over residues 26-41, 50-61, and 81-99; these read ASRE…KGEN, AAKDVEIEELTH, and APDE…KGEN. The segment covering 157–166 has biased composition (low complexity); sequence SSISSPTSES. Positions 167 to 179 are enriched in basic and acidic residues; the sequence is FPEKDEKTNKENE. Residue Ser215 is modified to Phosphoserine. Thr217 is modified (phosphothreonine). Residues 353-420 are a coiled coil; that stretch reads EKSDFSKNKL…LEKVQTTADK (68 aa). 2 Tudor domains span residues 529–602 and 629–686; these read RLTI…SEKV and QCTR…RETQ. Residues 743-764 are disordered; sequence SSAATPAGGRTNAGGVSTSNSA. The MBD domain occupies 818 to 884; the sequence is LDSYSPLAKP…DNFDFTPDLK (67 aa). One can recognise a Pre-SET domain in the interval 946-1018; sequence LCCDCEDDCS…NCLNRVVQFS (73 aa). The Zn(2+) site is built by Cys948, Cys950, Cys954, Cys960, Cys962, Cys1000, Cys1004, Cys1006, and Cys1010. Positions 1021-1237 constitute an SET domain; sequence MKLQVFKTSN…SGTELTWNYN (217 aa). Residues 1031–1033, Asp1069, and Tyr1071 contribute to the S-adenosyl-L-methionine site; that span reads RGW. Over residues 1086-1097 the composition is skewed to basic and acidic residues; sequence EGYESEVDHSDP. Positions 1086 to 1148 are disordered; the sequence is EGYESEVDHS…QSSELDSQER (63 aa). The segment covering 1098–1113 has biased composition (acidic residues); it reads DAEEDNGGPDAEDDDD. Low complexity predominate over residues 1129–1141; that stretch reads RSGSTQNSSTQSS. Residues Arg1191 and 1194-1195 contribute to the S-adenosyl-L-methionine site; that span reads NH. Zn(2+) is bound by residues Cys1197, Cys1250, Cys1252, and Cys1257. Residues 1246–1262 form the Post-SET domain; sequence KVLYCQCGAPNCRLRLL.

This sequence belongs to the class V-like SAM-binding methyltransferase superfamily. Histone-lysine methyltransferase family. Suvar3-9 subfamily. As to expression, expressed in ovary (at protein level).

It is found in the nucleus. The protein localises to the chromosome. The enzyme catalyses L-lysyl(9)-[histone H3] + 3 S-adenosyl-L-methionine = N(6),N(6),N(6)-trimethyl-L-lysyl(9)-[histone H3] + 3 S-adenosyl-L-homocysteine + 3 H(+). Its function is as follows. Histone methyltransferase that specifically trimethylates 'Lys-10' of histone H3 (H3K9me3) in ovary. H3K9me3 represents a specific tag for epigenetic transcriptional repression by recruiting Su(var)205/HP1 to methylated histones. Plays a central role during oogenesis. This chain is Histone-lysine N-methyltransferase eggless (egg), found in Drosophila melanogaster (Fruit fly).